A 185-amino-acid polypeptide reads, in one-letter code: Tetrahydromethanopterin S-methyltransferase subunit A 2 (185 aa).

Residues Met1–Asp21 are Cytoplasmic-facing. Residues Tyr22–Ser38 traverse the membrane as a helical segment. Residues His39–Thr185 lie on the Extracellular side of the membrane. Residue His88 coordinates 5-hydroxybenzimidazolylcob(I)amide.

Belongs to the MtrA family. As to quaternary structure, the complex is composed of 8 subunits; MtrA, MtrB, MtrC, MtrD, MtrE, MtrF, MtrG and MtrH. 5-hydroxybenzimidazolylcob(I)amide serves as cofactor.

The protein resides in the cell membrane. The enzyme catalyses 5-methyl-5,6,7,8-tetrahydromethanopterin + coenzyme M + 2 Na(+)(in) = 5,6,7,8-tetrahydromethanopterin + methyl-coenzyme M + 2 Na(+)(out). It functions in the pathway one-carbon metabolism; methanogenesis from CO(2); methyl-coenzyme M from 5,10-methylene-5,6,7,8-tetrahydromethanopterin: step 2/2. Functionally, part of a complex that catalyzes the formation of methyl-coenzyme M and tetrahydromethanopterin from coenzyme M and methyl-tetrahydromethanopterin. This is an energy-conserving, sodium-ion translocating step. This chain is Tetrahydromethanopterin S-methyltransferase subunit A 2, found in Methanothermobacter marburgensis (strain ATCC BAA-927 / DSM 2133 / JCM 14651 / NBRC 100331 / OCM 82 / Marburg) (Methanobacterium thermoautotrophicum).